We begin with the raw amino-acid sequence, 311 residues long: 4-hydroxyproline 2-epimerase (311 aa).

Catalysis depends on Cys89, which acts as the Proton acceptor. Substrate is bound by residues 90 to 91, His209, and Asp233; that span reads GH. The active-site Proton donor is the Cys237. 238–239 serves as a coordination point for substrate; the sequence is GT.

This sequence belongs to the proline racemase family.

It catalyses the reaction trans-4-hydroxy-L-proline = cis-4-hydroxy-D-proline. Functionally, catalyzes the epimerization of trans-4-hydroxy-L-proline (t4LHyp) to cis-4-hydroxy-D-proline (c4DHyp). Is likely involved in a degradation pathway that converts t4LHyp to alpha-ketoglutarate. Displays no proline racemase activity. This is 4-hydroxyproline 2-epimerase from Burkholderia ambifaria (strain ATCC BAA-244 / DSM 16087 / CCUG 44356 / LMG 19182 / AMMD) (Burkholderia cepacia (strain AMMD)).